Consider the following 437-residue polypeptide: Phosphoglucosamine mutase (437 aa).

Ser-93 serves as the catalytic Phosphoserine intermediate. 4 residues coordinate Mg(2+): Ser-93, Asp-230, Asp-232, and Asp-234. Ser-93 bears the Phosphoserine mark.

The protein belongs to the phosphohexose mutase family. The cofactor is Mg(2+). Activated by phosphorylation.

It carries out the reaction alpha-D-glucosamine 1-phosphate = D-glucosamine 6-phosphate. In terms of biological role, catalyzes the conversion of glucosamine-6-phosphate to glucosamine-1-phosphate. The chain is Phosphoglucosamine mutase from Clavibacter michiganensis subsp. michiganensis (strain NCPPB 382).